A 340-amino-acid polypeptide reads, in one-letter code: CMP-N-acetylneuraminate-beta-galactosamide-alpha-2,3-sialyltransferase 1 (340 aa).

Residues 1 to 13 lie on the Cytoplasmic side of the membrane; it reads MVTLRKRTLKVLT. A helical; Signal-anchor for type II membrane protein transmembrane segment spans residues 14–34; that stretch reads FLVLFIFLTSFFLNYSHTMVA. Residues 35–340 lie on the Lumenal side of the membrane; that stretch reads TTWFPKQMVL…INKIRIFKGR (306 aa). Disulfide bonds link C59–C64, C61–C139, and C142–C281. An N-linked (GlcNAc...) asparagine glycan is attached at N79. Q105 serves as a coordination point for substrate. The N-linked (GlcNAc...) asparagine glycan is linked to N114. Positions 147 and 170 each coordinate substrate. N201 carries an N-linked (GlcNAc...) asparagine glycan. Substrate is bound by residues Y230, Y266, G270, G290, H299, and H316. The N-linked (GlcNAc...) asparagine glycan is linked to N323.

This sequence belongs to the glycosyltransferase 29 family. In terms of processing, the soluble form derives from the membrane form by proteolytic processing.

The protein localises to the golgi apparatus. It is found in the golgi stack membrane. It localises to the trans-Golgi network membrane. Its subcellular location is the secreted. The enzyme catalyses a beta-D-galactosyl-(1-&gt;3)-N-acetyl-alpha-D-galactosaminyl derivative + CMP-N-acetyl-beta-neuraminate = an N-acetyl-alpha-neuraminyl-(2-&gt;3)-beta-D-galactosyl-(1-&gt;3)-N-acetyl-alpha-D-galactosaminyl derivative + CMP + H(+). It catalyses the reaction a ganglioside GM1 + CMP-N-acetyl-beta-neuraminate = a ganglioside GD1a + CMP + H(+). It carries out the reaction a ganglioside GM1 (d18:1(4E)) + CMP-N-acetyl-beta-neuraminate = a ganglioside GD1a (d18:1(4E)) + CMP + H(+). The catalysed reaction is ganglioside GM1 (d18:1(4E)/18:0) + CMP-N-acetyl-beta-neuraminate = ganglioside GD1a (18:1(4E)/18:0) + CMP + H(+). The enzyme catalyses a ganglioside GA1 + CMP-N-acetyl-beta-neuraminate = a ganglioside GM1b + CMP + H(+). It catalyses the reaction a ganglioside GA1 (d18:1(4E)) + CMP-N-acetyl-beta-neuraminate = a ganglioside GM1b (d18:1(4E)) + CMP + H(+). It carries out the reaction a ganglioside GD1b + CMP-N-acetyl-beta-neuraminate = a ganglioside GT1b + CMP + H(+). The catalysed reaction is a 3-O-[beta-D-galactosyl-(1-&gt;3)-N-acetyl-alpha-D-galactosaminyl]-L-threonyl-[protein] + CMP-N-acetyl-beta-neuraminate = a 3-O-[N-acetyl-alpha-neuraminyl-(2-&gt;3)-beta-D-galactosyl-(1-&gt;3)-N-acetyl-alpha-D-galactosaminyl]-L-threonyl-[protein] + CMP + H(+). The enzyme catalyses a 3-O-[beta-D-galactosyl-(1-&gt;3)-N-acetyl-alpha-D-galactosaminyl]-L-seryl-[protein] + CMP-N-acetyl-beta-neuraminate = 3-O-[N-acetyl-alpha-neuraminyl-(2-&gt;3)-beta-D-galactosyl-(1-&gt;3)-N-acetyl-alpha-D-galactosaminyl]-L-seryl-[protein] + CMP + H(+). Its pathway is protein modification; protein glycosylation. It participates in glycolipid biosynthesis. Its function is as follows. A beta-galactoside alpha2-&gt;3 sialyltransferase involved in terminal sialylation of glycoproteins and glycolipids. Catalyzes the transfer of sialic acid (N-acetyl-neuraminic acid; Neu5Ac) from the nucleotide sugar donor CMP-Neu5Ac onto acceptor Galbeta-(1-&gt;3)-GalNAc-terminated glycoconjugates through an alpha2-3 linkage. Adds sialic acid to the core 1 O-glycan, Galbeta-(1-&gt;3)-GalNAc-O-Ser/Thr, which is a major structure of mucin-type O-glycans. As part of a homeostatic mechanism that regulates CD8-positive T cell numbers, sialylates core 1 O-glycans of T cell glycoproteins, SPN/CD43 and PTPRC/CD45. Prevents premature apoptosis of thymic CD8-positive T cells prior to peripheral emigration, whereas in the secondary lymphoid organs controls the survival of CD8-positive memory T cells generated following a successful immune response. Transfers sialic acid to asialofetuin, presumably onto Galbeta-(1-&gt;3)-GalNAc-O-Ser. Sialylates GM1a, GA1 and GD1b gangliosides to form GD1a, GM1b and GT1b, respectively. The protein is CMP-N-acetylneuraminate-beta-galactosamide-alpha-2,3-sialyltransferase 1 (ST3GAL1) of Pan troglodytes (Chimpanzee).